Consider the following 87-residue polypeptide: MHTLEMLLLVLLLVPLAPGEGDGQAVGGDRNPSEARRAYKRLLQRPARRMDRGGCTPCGPNLCCSEEFRCGTSTHHQTYGEPACLSY.

The N-terminal stretch at 1–19 (MHTLEMLLLVLLLVPLAPG) is a signal peptide. Residues 20-52 (EGDGQAVGGDRNPSEARRAYKRLLQRPARRMDR) constitute a propeptide that is removed on maturation. Cystine bridges form between Cys-55–Cys-64, Cys-58–Cys-70, and Cys-63–Cys-84.

It belongs to the conotoxin Q superfamily. In terms of tissue distribution, expressed by the venom duct.

It localises to the secreted. This is Conotoxin Ca6.2 from Conus caracteristicus (Characteristic cone).